The chain runs to 186 residues: Peptidyl-tRNA hydrolase (186 aa).

Tyr-14 lines the tRNA pocket. His-19 acts as the Proton acceptor in catalysis. Positions 64, 66, and 112 each coordinate tRNA.

It belongs to the PTH family. As to quaternary structure, monomer.

The protein resides in the cytoplasm. The enzyme catalyses an N-acyl-L-alpha-aminoacyl-tRNA + H2O = an N-acyl-L-amino acid + a tRNA + H(+). Functionally, hydrolyzes ribosome-free peptidyl-tRNAs (with 1 or more amino acids incorporated), which drop off the ribosome during protein synthesis, or as a result of ribosome stalling. Catalyzes the release of premature peptidyl moieties from peptidyl-tRNA molecules trapped in stalled 50S ribosomal subunits, and thus maintains levels of free tRNAs and 50S ribosomes. The protein is Peptidyl-tRNA hydrolase of Bacillus cytotoxicus (strain DSM 22905 / CIP 110041 / 391-98 / NVH 391-98).